Reading from the N-terminus, the 89-residue chain is Large ribosomal subunit protein eL34 (89 aa).

The segment at methionine 1–serine 22 is disordered.

It belongs to the eukaryotic ribosomal protein eL34 family.

The chain is Large ribosomal subunit protein eL34 from Methanococcus maripaludis (strain C7 / ATCC BAA-1331).